We begin with the raw amino-acid sequence, 134 residues long: Protein NrdI (134 aa).

Belongs to the NrdI family.

Its function is as follows. Probably involved in ribonucleotide reductase function. The sequence is that of Protein NrdI from Rhizobium leguminosarum bv. trifolii (strain WSM2304).